Here is a 478-residue protein sequence, read N- to C-terminus: Oxidative stress-induced growth inhibitor 1 (478 aa).

S12 is subject to Phosphoserine.

Belongs to the OKL38 family. It depends on NADPH as a cofactor.

The protein localises to the midbody. In terms of biological role, monooxygenase catalytic activity. Involved in regulation of cytokinesis; promotes RHOA activity, probably acting locally at the midbody in late cytokinesis. Monooxygenase activity is involved in stabilizing transient structures between daughter cells, termed intercellular bridges, before abscission. Regulates differentiation and proliferation through the regulation of cell death. This Mus musculus (Mouse) protein is Oxidative stress-induced growth inhibitor 1.